Consider the following 109-residue polypeptide: Parvalbumin beta (109 aa).

An N-acetylalanine modification is found at Ala-2. EF-hand domains follow at residues 39-74 (KSAD…FKAG) and 78-109 (LSDA…MIKG). The Ca(2+) site is built by Asp-52, Asp-54, Ser-56, Tyr-58, Glu-60, Glu-63, Asp-91, Asp-93, Asp-95, Lys-97, and Glu-102.

The protein belongs to the parvalbumin family. The N-terminus is blocked.

Functionally, in muscle, parvalbumin is thought to be involved in relaxation after contraction. It binds two calcium ions. The polypeptide is Parvalbumin beta (Scomber scombrus (Atlantic mackerel)).